The primary structure comprises 108 residues: Class I hydrophobin eas (108 aa).

Residues 1 to 26 (MQFTSVFTILAIAMTAAAAPAEVVPR) form the signal peptide. 4 disulfides stabilise this stretch: cysteine 35/cysteine 86, cysteine 44/cysteine 80, cysteine 45/cysteine 71, and cysteine 87/cysteine 106.

This sequence belongs to the fungal hydrophobin family. In terms of assembly, self-assembles to form functional amyloid fibrils called rodlets. Self-assembly into fibrillar rodlets occurs spontaneously at hydrophobic:hydrophilic interfaces and the rodlets further associate laterally to form amphipathic monolayers.

The protein localises to the secreted. It is found in the spore wall. Aerial growth, conidiation, and dispersal of filamentous fungi in the environment rely upon a capability of their secreting small amphipathic proteins called hydrophobins (HPBs) with low sequence identity. Class I can self-assemble into an outermost layer of rodlet bundles on aerial cell surfaces, conferring cellular hydrophobicity that supports fungal growth, development and dispersal; whereas class II form highly ordered films at water-air interfaces through intermolecular interactions but contribute nothing to the rodlet structure. Eas is a class I hydrophobin that forms functional amyloid fibrils called rodlets that facilitate spore formation and dispersal. The polypeptide is Class I hydrophobin eas (Neurospora crassa (strain ATCC 24698 / 74-OR23-1A / CBS 708.71 / DSM 1257 / FGSC 987)).